A 481-amino-acid polypeptide reads, in one-letter code: Leukocyte immunoglobulin-like receptor subfamily A member 6 (481 aa).

A signal peptide spans 1 to 23; that stretch reads MTPALTALLCLGLSLGPRTHVQA. The Ig-like C2-type 1 domain occupies 24–118; it reads GPLPKPTLWA…PSDPLELVVT (95 aa). Residues 24–447 are Extracellular-facing; sequence GPLPKPTLWA…SHAKDYTVEN (424 aa). Residues Cys-49 and Cys-98 are joined by a disulfide bond. An N-linked (GlcNAc...) asparagine glycan is attached at Asn-139. 2 disulfides stabilise this stretch: Cys-144/Cys-196 and Cys-245/Cys-296. 2 consecutive Ig-like C2-type domains span residues 225-314 and 323-408; these read PSLL…DPLN and DRVS…HLLS. N-linked (GlcNAc...) asparagine glycans are attached at residues Asn-301 and Asn-340. Cysteines 345 and 396 form a disulfide. Residues 418–439 are disordered; sequence VSGPSGGPSLPPTGPPSTPASH. The segment covering 426–435 has biased composition (pro residues); the sequence is SLPPTGPPST. Residues 448–468 form a helical membrane-spanning segment; it reads LIRMGMAGLVLVVLGILLFEA. At 469–481 the chain is on the cytoplasmic side; it reads QHSQRSPQDAARR.

It is found in the membrane. May act as receptor for class I MHC antigens. This is Leukocyte immunoglobulin-like receptor subfamily A member 6 (LILRA6) from Pan troglodytes (Chimpanzee).